Reading from the N-terminus, the 400-residue chain is Eukaryotic translation initiation factor 3 subunit M (400 aa).

Positions 180–354 (LIAKIYSALV…QSFAVHRAQK (175 aa)) constitute a PCI domain.

The protein belongs to the eIF-3 subunit M family. In terms of assembly, component of the eukaryotic translation initiation factor 3 (eIF-3) complex.

The protein localises to the cytoplasm. Its function is as follows. Component of the eukaryotic translation initiation factor 3 (eIF-3) complex, which is involved in protein synthesis of a specialized repertoire of mRNAs and, together with other initiation factors, stimulates binding of mRNA and methionyl-tRNAi to the 40S ribosome. The eIF-3 complex specifically targets and initiates translation of a subset of mRNAs involved in cell proliferation. The chain is Eukaryotic translation initiation factor 3 subunit M from Yarrowia lipolytica (strain CLIB 122 / E 150) (Yeast).